An 876-amino-acid chain; its full sequence is Alanine--tRNA ligase (876 aa).

H568, H572, C669, and H673 together coordinate Zn(2+).

The protein belongs to the class-II aminoacyl-tRNA synthetase family. Zn(2+) is required as a cofactor.

It is found in the cytoplasm. It carries out the reaction tRNA(Ala) + L-alanine + ATP = L-alanyl-tRNA(Ala) + AMP + diphosphate. Functionally, catalyzes the attachment of alanine to tRNA(Ala) in a two-step reaction: alanine is first activated by ATP to form Ala-AMP and then transferred to the acceptor end of tRNA(Ala). Also edits incorrectly charged Ser-tRNA(Ala) and Gly-tRNA(Ala) via its editing domain. The chain is Alanine--tRNA ligase from Sulfurihydrogenibium sp. (strain YO3AOP1).